Reading from the N-terminus, the 340-residue chain is Guanine nucleotide-binding protein subunit beta-1 (340 aa).

7 WD repeats span residues 53-83 (GHLA…IVWD), 95-125 (LRSS…SIYS), 141-170 (GHTG…ALWD), 182-212 (GHTG…KLWD), 224-254 (GHES…RLFD), 268-298 (NIIC…NVWD), and 310-340 (GHDN…KIWN).

This sequence belongs to the WD repeat G protein beta family. As to quaternary structure, g proteins are composed of 3 units, alpha, beta and gamma. Interacts with G protein gamma subunits gpc-1 and gpc-2 and with egl-10 and eat-16. Interacts with goa-1 (in GDP-bound form).

Functionally, guanine nucleotide-binding proteins (G proteins) are involved as a modulator or transducer in various transmembrane signaling systems. The beta and gamma chains are required for the GTPase activity, for replacement of GDP by GTP, and for G protein-effector interaction. In the early embryo, controls the magnitude of the forces acting on centrosomes but is not required for generating asymmetric forces. The chain is Guanine nucleotide-binding protein subunit beta-1 (gpb-1) from Caenorhabditis briggsae.